The sequence spans 337 residues: MTLQIGVIGCGAIGQDHIRRLTRTLSGARVVAVTDIDPTQAHAAVANHGLNAEVYANGGDLIEAPDVQAVLVTSWGPTHEEFVLKAIAQGKPVFCEKPLAVTADGCMRIVAAEQAHGSRLVQVGFMRPYDAGYRALKQVIDSGTIGAPLMLHCAHRNPSVGDRYMTDMAITDTLIHELDVLRWLTGDDYVSAQVVYPRKTRHASSHLADPQIVLLETAQGVRIDVEIFVNCQYGYDIQCEVVGENGIATLPDPQAVSLKHAARHAIAILTDWKDRFIAAYDIELQAFIDGVQGGALTGPSAWDGYAAAVAADACVRAQKSGAIERIEMAARPAFYRG.

Belongs to the Gfo/Idh/MocA family. As to quaternary structure, homotetramer.

It catalyses the reaction myo-inositol + NAD(+) = scyllo-inosose + NADH + H(+). Functionally, involved in the oxidation of myo-inositol (MI) to 2-keto-myo-inositol (2KMI or 2-inosose). The sequence is that of Inositol 2-dehydrogenase from Ralstonia nicotianae (strain ATCC BAA-1114 / GMI1000) (Ralstonia solanacearum).